Consider the following 676-residue polypeptide: Pentatricopeptide repeat-containing protein ATP4 homolog, chloroplastic (676 aa).

The N-terminal 73 residues, 1–73, are a transit peptide targeting the chloroplast; it reads MASPSSLLSW…NSPRAAGLAR (73 aa). The segment at 17–58 is disordered; sequence LSFQPKNPSPSPATARVSVQDPPPPPSDANPSPGRSSNTSRY. PPR repeat units lie at residues 148–182, 183–217, 218–252, 253–287, 288–322, 323–353, 358–388, 396–430, 431–465, and 532–566; these read EVIL…GVQP, DNAT…GCSP, DMLT…KWQL, DPVI…GVKP, NLVV…EAVP, NKAT…MKDE, DVVL…MKAS, DSWS…GFKP, NIFI…GITP, and RMPY…GIYS. A Smr domain is found at 578-662; it reads LHLRGLSVGA…WFLTTSVAAR (85 aa).

Belongs to the PPR family. P subfamily.

Its subcellular location is the plastid. The protein localises to the chloroplast. Functionally, involved in translation and accumulation of chloroplast ATP synthase subunits. In Oryza sativa subsp. japonica (Rice), this protein is Pentatricopeptide repeat-containing protein ATP4 homolog, chloroplastic.